Reading from the N-terminus, the 183-residue chain is Auxin-responsive protein IAA20 (183 aa).

2 disordered regions span residues 1–23 and 42–77; these read MELE…TATA and GFEE…NKRR. The EAR-like (transcriptional repression) motif lies at 3–7; sequence LELGL. Residues 98-183 form the PB1 domain; the sequence is GGYVKVKMEG…KSVKRLKILV (86 aa).

It belongs to the Aux/IAA family. As to quaternary structure, homodimers and heterodimers. In terms of tissue distribution, expressed at very low levels in etiolated seedlings and flowers.

It is found in the nucleus. Its function is as follows. Aux/IAA proteins are short-lived transcriptional factors that function as repressors of early auxin response genes at low auxin concentrations. This Oryza sativa subsp. japonica (Rice) protein is Auxin-responsive protein IAA20 (IAA20).